The following is a 324-amino-acid chain: MAELEFEKPVVELRNKIRELKDYTKNSQMDFSEEIRILEEKLENLEEDIYGNLKVWDRVQIARHAERPTTLDYIEHLFTDFFECHGDRLFGDDAAIVGGIAKYKGMPVTVIGHQRGKDTKENIRRNFGMPHPEGYRKALRLMKQAEKFNRPIICFIDTKGAYPGKAAEERGQSEAIARNLFEMAGLTVPVICIVIGEGGSGGALGLGVGDYIHMLENSTYSVITPEGAAAILWKDAGKAKEAAEAMKITAADLKELGVIDEIIPEARGGAHRNVLKQSENIDLMIRKTFEQLNGISKDELIEKRYEKYMKIGQVSFSNASIWIK.

A CoA carboxyltransferase C-terminal domain is found at 37–291; that stretch reads ILEEKLENLE…DLMIRKTFEQ (255 aa).

The protein belongs to the AccA family. Acetyl-CoA carboxylase is a heterohexamer composed of biotin carboxyl carrier protein (AccB), biotin carboxylase (AccC) and two subunits each of ACCase subunit alpha (AccA) and ACCase subunit beta (AccD).

The protein resides in the cytoplasm. It carries out the reaction N(6)-carboxybiotinyl-L-lysyl-[protein] + acetyl-CoA = N(6)-biotinyl-L-lysyl-[protein] + malonyl-CoA. It participates in lipid metabolism; malonyl-CoA biosynthesis; malonyl-CoA from acetyl-CoA: step 1/1. Functionally, component of the acetyl coenzyme A carboxylase (ACC) complex. First, biotin carboxylase catalyzes the carboxylation of biotin on its carrier protein (BCCP) and then the CO(2) group is transferred by the carboxyltransferase to acetyl-CoA to form malonyl-CoA. In Bacillus cereus (strain B4264), this protein is Acetyl-coenzyme A carboxylase carboxyl transferase subunit alpha.